The primary structure comprises 315 residues: Ribosomal RNA small subunit methyltransferase H (315 aa).

Residues 61–63 (GGH), Asp80, Phe108, Asp124, and Gln131 contribute to the S-adenosyl-L-methionine site. The disordered stretch occupies residues 291–315 (PQPEEEEKNPRSRSAKLRFAQRKPL). Over residues 301 to 315 (RSRSAKLRFAQRKPL) the composition is skewed to basic residues.

The protein belongs to the methyltransferase superfamily. RsmH family.

It localises to the cytoplasm. It catalyses the reaction cytidine(1402) in 16S rRNA + S-adenosyl-L-methionine = N(4)-methylcytidine(1402) in 16S rRNA + S-adenosyl-L-homocysteine + H(+). Functionally, specifically methylates the N4 position of cytidine in position 1402 (C1402) of 16S rRNA. This chain is Ribosomal RNA small subunit methyltransferase H, found in Crocosphaera subtropica (strain ATCC 51142 / BH68) (Cyanothece sp. (strain ATCC 51142)).